A 415-amino-acid polypeptide reads, in one-letter code: MQMSYAIRCAFYQLLLAALMLVAMLQLLYLSLLSGLHGQEEQDQYFEFFPPSPRSVDQVKAQLRTALASGGVLDASGDYRVYRGLLKTTMDPNDVILATHASVDNLLHLSGLLERWEGPLSVSVFAATKEEAQLATVLAYALSSHCPDMRARVAMHLVCPSRYEAAVPDPREPGEFALLRSCQEVFDKLARVAQPGINYALGTNVSYPNNLLRNLAREGANYALVIDVDMVPSEGLWRGLREMLDQSNQWGGTALVVPAFEIRRARRMPMNKNELVQLYQVGEVRPFYYGLCTPCQAPTNYSRWVNLPEESLLRPAYVVPWQDPWEPFYVAGGKVPTFDERFRQYGFNRISQACELHVAGFDFEVLNEGFLVHKGFKEALKFHPQKEAENQHNKILYRQFKQELKAKYPNSPRRC.

The Cytoplasmic segment spans residues 1–8 (MQMSYAIR). Residues 9 to 36 (CAFYQLLLAALMLVAMLQLLYLSLLSGL) form a helical; Signal-anchor for type II membrane protein membrane-spanning segment. Residues 37 to 415 (HGQEEQDQYF…AKYPNSPRRC (379 aa)) are Lumenal-facing. Asn-204 carries N-linked (GlcNAc...) asparagine glycosylation. Mn(2+) contacts are provided by Asp-227 and Asp-229. Residue Asn-300 is glycosylated (N-linked (GlcNAc...) asparagine).

Belongs to the glycosyltransferase 49 family. In terms of assembly, interacts with LARGE1 and LARGE2. Mn(2+) serves as cofactor. In the adult, highly expressed in heart, brain, skeletal muscle and kidney and to a lesser extent in placenta, pancreas, spleen, prostate, testis, ovary, small intestine and colon. Very weak expression in lung, liver, thymus and peripheral blood leukocytes. In fetal highly expressed in brain and kidney and to a lesser extent in lung and liver.

It is found in the golgi apparatus membrane. The enzyme catalyses 3-O-[beta-D-Xyl-(1-&gt;4)-Rib-ol-P-Rib-ol-P-3-beta-D-GalNAc-(1-&gt;3)-beta-D-GlcNAc-(1-&gt;4)-(O-6-P-alpha-D-Man)]-Thr-[protein] + UDP-alpha-D-glucuronate = 3-O-[beta-D-GlcA-(1-&gt;3)-beta-D-Xyl-(1-&gt;4)-Rib-ol-P-Rib-ol-P-3-beta-D-GalNAc-(1-&gt;3)-beta-D-GlcNAc-(1-&gt;4)-(O-6-P-alpha-D-Man)]-Thr-[protein] + UDP + H(+). It functions in the pathway protein modification; protein glycosylation. In terms of biological role, beta-1,4-glucuronyltransferase involved in O-mannosylation of alpha-dystroglycan (DAG1). Transfers a glucuronic acid (GlcA) residue onto a xylose (Xyl) acceptor to produce the glucuronyl-beta-1,4-xylose-beta disaccharide primer, which is further elongated by LARGE1, during synthesis of phosphorylated O-mannosyl glycan. Phosphorylated O-mannosyl glycan is a carbohydrate structure present in alpha-dystroglycan (DAG1), which is required for binding laminin G-like domain-containing extracellular proteins with high affinity. Required for axon guidance; via its function in O-mannosylation of alpha-dystroglycan (DAG1). The sequence is that of Beta-1,4-glucuronyltransferase 1 from Homo sapiens (Human).